Reading from the N-terminus, the 512-residue chain is MTQSALHTEFGGIAALRDALARRQVSAVELAQSGLDAAQAASGLNAFLHIDPELTLAQARAADAALAAGTAGPLAGIPIAHKDAFVTRGWRTTAGSKMLAGYASPFDATVVERLAEAGAVSLGKLNCDEFAMGSGNENSAYGPVRNPWDTRAVPGGSSGGSAAAVAARLVAAATGTDTGGSVRQPAALCGVSGIKPTYGTVSRYGMIAFGSSLDQAGPLAPSSRDLLELLDVMTGFDPRDATSLQACDGQANESGRVRRGHDAAQAGYDAAGSQPLKGLRIGVPQEYFGAGLAPDVAAAVEAALAQFEQLGAVRVPVSLPRTELAIPAYYVIAPAEASSNLARYDGVRYGHRAAQYGDLNEMISRSRAEGFGDEVKRRILIGTYVLSHGYYDAYYLQAQRLRRLIAQDFQRAFADQCDVIMGPVSPTVAKNIGDNRDDPTADWLADVYTLGVSLAGLPAMSVPCGFGGQDGRRPVGLQIIGNYFDEGRLLALADRYQQVTDWHQRAPVSQDA.

Catalysis depends on charge relay system residues Lys82 and Ser157. The active-site Acyl-ester intermediate is the Ser181.

This sequence belongs to the amidase family. GatA subfamily. Heterotrimer of A, B and C subunits.

It carries out the reaction L-glutamyl-tRNA(Gln) + L-glutamine + ATP + H2O = L-glutaminyl-tRNA(Gln) + L-glutamate + ADP + phosphate + H(+). In terms of biological role, allows the formation of correctly charged Gln-tRNA(Gln) through the transamidation of misacylated Glu-tRNA(Gln) in organisms which lack glutaminyl-tRNA synthetase. The reaction takes place in the presence of glutamine and ATP through an activated gamma-phospho-Glu-tRNA(Gln). This Bordetella bronchiseptica (strain ATCC BAA-588 / NCTC 13252 / RB50) (Alcaligenes bronchisepticus) protein is Glutamyl-tRNA(Gln) amidotransferase subunit A.